A 338-amino-acid polypeptide reads, in one-letter code: MNPFHQRHFLRLLDFSSAEIHALLKLAAELKSTKKSGTEKALLTGKNIVLIFEKDSTRTRCSFEVAAYDQGANITYLGPSGNQIGHKESIKDTARILGRMYDGIQYRGYAQTIVESLAKYAGVPVWNGLTDEFHPTQLLADLLTIQEHQPEKPLSEIKFAYLGDARNNMGNTMLEAAALTGMDVRLIAPEKYWPNAALVTECQKLAEKTGGKITLTENITEGVKNTDFLYTDVWVSMGEPKDVWQQRVHLLKPYQVNMDVVSMTGNPQVKFLHCLPAFHDEETALGKQLAAEFNMYGGLEVTNEVFESEHSIVFDQGENRLHTIKAVMVATLANDLKI.

Carbamoyl phosphate is bound by residues 56–59, glutamine 83, arginine 107, and 134–137; these read STRT and HPTQ. L-ornithine-binding positions include asparagine 168, aspartate 232, and 236-237; that span reads SM. Carbamoyl phosphate-binding positions include 274–275 and arginine 320; that span reads CL.

This sequence belongs to the aspartate/ornithine carbamoyltransferase superfamily. OTCase family.

The protein localises to the cytoplasm. It carries out the reaction carbamoyl phosphate + L-ornithine = L-citrulline + phosphate + H(+). Its pathway is amino-acid biosynthesis; L-arginine biosynthesis; L-arginine from L-ornithine and carbamoyl phosphate: step 1/3. Functionally, reversibly catalyzes the transfer of the carbamoyl group from carbamoyl phosphate (CP) to the N(epsilon) atom of ornithine (ORN) to produce L-citrulline. This Photorhabdus laumondii subsp. laumondii (strain DSM 15139 / CIP 105565 / TT01) (Photorhabdus luminescens subsp. laumondii) protein is Ornithine carbamoyltransferase.